The primary structure comprises 432 residues: MQKIAGVKGMNDLLPGDAPLWEHFDNAVRSMLRAYGYQQIRTPIVEQTQLFVRGIGEVTDIVEKEMYSFTDALNGEQLTMRPEGTAAAVRAVIEHNLLYDGPKRLWYTGPMFRHEKPQRGRYRQFHQVGVEALGFAGPDIDAEVILMCQRLWDDLGLVGLKLELNSLGQAEERAAHRADLIKYLEGFQDILDEDSKRRLYTNPLRVLDTKNPALQEMAAGAPKLIDYLGEESCAHFEGVQKLLKANNIPFTINPRLVRGLDYYNLTVFEWTTDKLGAQGTVAGGGRYDPLIEQIGGKPAPACGWAMGVERIIELLREENLAPEPQGSDVYIVHQGDEAQVQALVAAERLRDAGLDVILHASAEGRNGSFKSQFKRADASGAAYAVIIGDDEVASGVVQIKPLRGDPNADAQQTVPSDQLVDRLIDAMVANSD.

It belongs to the class-II aminoacyl-tRNA synthetase family. In terms of assembly, homodimer.

The protein localises to the cytoplasm. It catalyses the reaction tRNA(His) + L-histidine + ATP = L-histidyl-tRNA(His) + AMP + diphosphate + H(+). In Ralstonia nicotianae (strain ATCC BAA-1114 / GMI1000) (Ralstonia solanacearum), this protein is Histidine--tRNA ligase.